A 261-amino-acid polypeptide reads, in one-letter code: 3-deoxy-manno-octulosonate cytidylyltransferase (261 aa).

The protein belongs to the KdsB family.

Its subcellular location is the cytoplasm. It carries out the reaction 3-deoxy-alpha-D-manno-oct-2-ulosonate + CTP = CMP-3-deoxy-beta-D-manno-octulosonate + diphosphate. It functions in the pathway nucleotide-sugar biosynthesis; CMP-3-deoxy-D-manno-octulosonate biosynthesis; CMP-3-deoxy-D-manno-octulosonate from 3-deoxy-D-manno-octulosonate and CTP: step 1/1. It participates in bacterial outer membrane biogenesis; lipopolysaccharide biosynthesis. Functionally, activates KDO (a required 8-carbon sugar) for incorporation into bacterial lipopolysaccharide in Gram-negative bacteria. This Dechloromonas aromatica (strain RCB) protein is 3-deoxy-manno-octulosonate cytidylyltransferase.